Consider the following 519-residue polypeptide: Pleckstrin homology domain-containing family A member 8 (519 aa).

One can recognise a PH domain in the interval 1–93 (MEGVLYKWTN…WLVALGSAKA (93 aa)). At Thr-139 the chain carries Phosphothreonine. Ser-145 is modified (phosphoserine). Thr-153 carries the post-translational modification Phosphothreonine. The tract at residues 274–302 (GEDNLGNHDSSLAQPASDSSSSPPESHWE) is disordered. The segment covering 282-298 (DSSLAQPASDSSSSPPE) has biased composition (low complexity). The tract at residues 310–519 (TFFSTMNTSF…VHGLESDEVV (210 aa)) is glycolipid transfer protein homology domain.

Homodimer. Interacts with ARF1; the interaction together with phosphatidylinositol 4-phosphate binding is required for FAPP2 GlcCer transfer ability.

Its subcellular location is the golgi apparatus. It localises to the trans-Golgi network membrane. The protein resides in the membrane. Cargo transport protein that is required for apical transport from the trans-Golgi network (TGN). Transports AQP2 from the trans-Golgi network (TGN) to sites of AQP2 phosphorylation. Mediates the non-vesicular transport of glucosylceramide (GlcCer) from the trans-Golgi network (TGN) to the plasma membrane and plays a pivotal role in the synthesis of complex glycosphingolipids. Binding of both phosphatidylinositol 4-phosphate (PIP) and ARF1 are essential for the GlcCer transfer ability. Also required for primary cilium formation, possibly by being involved in the transport of raft lipids to the apical membrane, and for membrane tubulation. This is Pleckstrin homology domain-containing family A member 8 (PLEKHA8) from Canis lupus familiaris (Dog).